A 328-amino-acid polypeptide reads, in one-letter code: D-cysteine desulfhydrase (328 aa).

At Lys-51 the chain carries N6-(pyridoxal phosphate)lysine.

It belongs to the ACC deaminase/D-cysteine desulfhydrase family. In terms of assembly, homodimer. Requires pyridoxal 5'-phosphate as cofactor.

The enzyme catalyses D-cysteine + H2O = hydrogen sulfide + pyruvate + NH4(+) + H(+). In terms of biological role, catalyzes the alpha,beta-elimination reaction of D-cysteine and of several D-cysteine derivatives. It could be a defense mechanism against D-cysteine. This is D-cysteine desulfhydrase from Salmonella paratyphi B (strain ATCC BAA-1250 / SPB7).